The following is a 140-amino-acid chain: 3-hydroxyacyl-[acyl-carrier-protein] dehydratase FabZ (140 aa).

H48 is a catalytic residue.

It belongs to the thioester dehydratase family. FabZ subfamily.

It localises to the cytoplasm. It carries out the reaction a (3R)-hydroxyacyl-[ACP] = a (2E)-enoyl-[ACP] + H2O. Functionally, involved in unsaturated fatty acids biosynthesis. Catalyzes the dehydration of short chain beta-hydroxyacyl-ACPs and long chain saturated and unsaturated beta-hydroxyacyl-ACPs. The polypeptide is 3-hydroxyacyl-[acyl-carrier-protein] dehydratase FabZ (Halalkalibacterium halodurans (strain ATCC BAA-125 / DSM 18197 / FERM 7344 / JCM 9153 / C-125) (Bacillus halodurans)).